The sequence spans 129 residues: Large ribosomal subunit protein uL22 (129 aa).

This sequence belongs to the universal ribosomal protein uL22 family. In terms of assembly, part of the 50S ribosomal subunit.

Functionally, this protein binds specifically to 23S rRNA; its binding is stimulated by other ribosomal proteins, e.g. L4, L17, and L20. It is important during the early stages of 50S assembly. It makes multiple contacts with different domains of the 23S rRNA in the assembled 50S subunit and ribosome. The globular domain of the protein is located near the polypeptide exit tunnel on the outside of the subunit, while an extended beta-hairpin is found that lines the wall of the exit tunnel in the center of the 70S ribosome. This Aster yellows witches'-broom phytoplasma (strain AYWB) protein is Large ribosomal subunit protein uL22.